The primary structure comprises 268 residues: Tryptophan synthase alpha chain (268 aa).

Catalysis depends on proton acceptor residues E49 and D60.

It belongs to the TrpA family. As to quaternary structure, tetramer of two alpha and two beta chains.

It catalyses the reaction (1S,2R)-1-C-(indol-3-yl)glycerol 3-phosphate + L-serine = D-glyceraldehyde 3-phosphate + L-tryptophan + H2O. It functions in the pathway amino-acid biosynthesis; L-tryptophan biosynthesis; L-tryptophan from chorismate: step 5/5. Functionally, the alpha subunit is responsible for the aldol cleavage of indoleglycerol phosphate to indole and glyceraldehyde 3-phosphate. In Yersinia pestis bv. Antiqua (strain Antiqua), this protein is Tryptophan synthase alpha chain.